The following is a 384-amino-acid chain: tRNA-specific 2-thiouridylase MnmA (384 aa).

ATP contacts are provided by residues 9–16 (GMSGGVDS) and M35. The segment at 95-97 (NPD) is interaction with target base in tRNA. C100 acts as the Nucleophile in catalysis. C100 and C196 are oxidised to a cystine. G124 serves as a coordination point for ATP. The interval 146-148 (KDQ) is interaction with tRNA. C196 acts as the Cysteine persulfide intermediate in catalysis. An interaction with tRNA region spans residues 308-309 (RY).

It belongs to the MnmA/TRMU family.

Its subcellular location is the cytoplasm. The catalysed reaction is S-sulfanyl-L-cysteinyl-[protein] + uridine(34) in tRNA + AH2 + ATP = 2-thiouridine(34) in tRNA + L-cysteinyl-[protein] + A + AMP + diphosphate + H(+). Its function is as follows. Catalyzes the 2-thiolation of uridine at the wobble position (U34) of tRNA, leading to the formation of s(2)U34. The chain is tRNA-specific 2-thiouridylase MnmA from Paraburkholderia phymatum (strain DSM 17167 / CIP 108236 / LMG 21445 / STM815) (Burkholderia phymatum).